Consider the following 226-residue polypeptide: Cytidylate kinase (226 aa).

11-19 (GPASAGKST) contacts ATP.

The protein belongs to the cytidylate kinase family. Type 1 subfamily.

Its subcellular location is the cytoplasm. The catalysed reaction is CMP + ATP = CDP + ADP. It carries out the reaction dCMP + ATP = dCDP + ADP. This Limosilactobacillus fermentum (strain NBRC 3956 / LMG 18251) (Lactobacillus fermentum) protein is Cytidylate kinase.